Here is a 679-residue protein sequence, read N- to C-terminus: Glycine--tRNA ligase beta subunit (679 aa).

It belongs to the class-II aminoacyl-tRNA synthetase family. As to quaternary structure, tetramer of two alpha and two beta subunits.

The protein resides in the cytoplasm. It carries out the reaction tRNA(Gly) + glycine + ATP = glycyl-tRNA(Gly) + AMP + diphosphate. The polypeptide is Glycine--tRNA ligase beta subunit (Streptococcus agalactiae serotype V (strain ATCC BAA-611 / 2603 V/R)).